Reading from the N-terminus, the 250-residue chain is Lymphotoxin-beta (250 aa).

The Cytoplasmic segment spans residues 1-26 (MGAPGLETRAGGPNGKSYLLLASVGA). A helical; Signal-anchor for type II membrane protein membrane pass occupies residues 27-47 (AVLGTLLLSVPITVLTVLALM). Topologically, residues 48–250 (PQEQGGQVAD…KTFFGAVMVG (203 aa)) are extracellular. Residues 87–249 (PAAHLIGIAK…GKTFFGAVMV (163 aa)) enclose the THD domain. Residue Asn-228 is glycosylated (N-linked (GlcNAc...) asparagine).

The protein belongs to the tumor necrosis factor family. As to quaternary structure, heterotrimer of either two LTB and one LTA subunits or (less prevalent) two LTA and one LTB subunits.

The protein resides in the membrane. Functionally, cytokine that binds to LTBR/TNFRSF3. May play a specific role in immune response regulation. Provides the membrane anchor for the attachment of the heterotrimeric complex to the cell surface. In Notamacropus eugenii (Tammar wallaby), this protein is Lymphotoxin-beta (LTB).